The sequence spans 283 residues: Pseudokinase OPG198 (283 aa).

Residues M1 and K30 each coordinate ATP. Residues 1-283 (MESFKYCFDN…DRLRKLFIQD (283 aa)) form the Protein kinase domain.

The protein belongs to the protein kinase superfamily. Ser/Thr protein kinase family. Poxviruses subfamily. As to quaternary structure, interacts with B1/VPK1. Interacts with host VRK1. Interacts with host VRK2.

The protein resides in the host nucleus. With respect to regulation, both catalytically active kinases B1/VPK1 and host VRK2 repress B12 inhibitory activity in a B1/VPK1 deletion mutant strain. Pseudokinase that plays a role in viral DNA replication repression by activating the antiviral protein BANF1 and inhibiting the activity of host VRK1, a cellular modulator of BANF1. The chain is Pseudokinase OPG198 (OPG198) from Vaccinia virus (strain Western Reserve) (VACV).